The following is a 59-amino-acid chain: MSGRGFLLLALLLLVTVEATKVEKKHSGFLLAWSGPRNRFVRFGRRDMQSPLLSERLRL.

A signal peptide spans 1 to 19 (MSGRGFLLLALLLLVTVEA). Residues 20-25 (TKVEKK) constitute a propeptide that is removed on maturation. Positions 32 to 39 (AWSGPRNR) are positively charged region crucial for activity against MRGPRX1 receptors. Phenylalanine 43 is subject to Phenylalanine amide. Residues 45–59 (RRDMQSPLLSERLRL) constitute a propeptide that is removed on maturation.

This sequence belongs to the FARP (FMRFamide related peptide) family. Expressed by the venom duct.

The protein localises to the secreted. In terms of biological role, this peptide activates human and mouse sensory neuron-specific G-protein coupled receptors MRGPRX1. The activity on human receptors has been measured (EC(50)=1.8 uM). Compared with the agonist chloroquine (anti-malaria drug), it is 200-fold more potent. The peptide also causes an increase in cytosolic calcium in a specific subset of DRG neurons, and, in contrast to other Conus venom peptides, the peptide also affects a large fraction of the non-neuronal cells. In vivo, when intracranially injected into mice, it principally renders mice unable to move, and at very low doses, it causes hyperactivity. It also induces itch sensation, since intradermal cheek injection into humanized transgenic mouse (mouse MRGPRX1 replaced by human MRGPRX1) induces scratching. In vivo, when tested at high doses (10 uM) on zebrafish larvae, it induces a range of behavioral effects ranging from an early hypoactivity during the first hour of treatment to an increase in movement during the following hours when the larvae are submitted to strobe light phases. The polypeptide is Conorfamide-Vc1 (Conus victoriae (Queen Victoria cone)).